We begin with the raw amino-acid sequence, 298 residues long: Super small secreted glycoprotein (298 aa).

An N-terminal signal peptide occupies residues 1 to 32 (MGVTGILQLPRDRFKRTSFFLWVIILFQRTFS). N40 carries an N-linked (GlcNAc...) asparagine; by host glycan. Disulfide bonds link C108-C135 and C121-C147. N-linked (GlcNAc...) asparagine; by host glycans are attached at residues N204, N228, N238, N257, and N268.

It belongs to the filoviruses glycoprotein family.

It localises to the secreted. The protein is Super small secreted glycoprotein (GP) of Epomops franqueti (Franquet's epauletted fruit bat).